We begin with the raw amino-acid sequence, 398 residues long: GATA transcription factor 21 (398 aa).

Positions 20–51 (QPFFYPLGSSSSLHHHHHHHHHQVPSNSSSSS) are disordered. A compositionally biased stretch (basic residues) spans 32–42 (LHHHHHHHHHQ). Positions 109 to 116 (PKKETRLK) match the Nuclear localization signal motif. A disordered region spans residues 122–144 (KDHEDQPHPLHQNPTKPDSDSDK). The GATA-type zinc finger occupies 226 to 280 (NGVIRVCSDCNTTKTPLWRSGPRGPKSLCNACGIRQRKARRAAMAAAAAAGDQEV). Residues 289 to 353 (LPLKKKLQNK…KSTTSSNSSI (65 aa)) are disordered. A compositionally biased stretch (basic residues) spans 291–302 (LKKKLQNKKKRS). Low complexity predominate over residues 343–353 (SKSTTSSNSSI).

The protein belongs to the type IV zinc-finger family. Class B subfamily. Interacts with SNL1. Forms heterodimers with GATA18. Expressed predominantly in leaves, and barely in stems, flowers and siliques.

The protein resides in the nucleus. In terms of biological role, transcriptional regulator that specifically binds 5'-GATA-3' or 5'-GAT-3' motifs within gene promoters. Involved in the modulation of chloroplast development, growth and division in a cytokinin-dependent manner. Repressor of the gibberellic acid (GA) signaling pathway that represses flowering and modulates greening, in a SOC1-dependent manner. Prevents the accumulation of SOC1 during flowering. Promotes chlorophyll biosynthesis throughout the plant, by regulating chlorophyll biosynthetic genes (e.g. HEMA1 and GUN4) and chloroplast localized glutamate synthase (e.g. GLU1). Involved in the regulation of sugar-sensing genes (e.g. HXK1, HXK2, STP13 and PLT6). Regulator of germination, senescence, elongation growth and flowering time. Also influences leaf starch content. This chain is GATA transcription factor 21, found in Arabidopsis thaliana (Mouse-ear cress).